A 134-amino-acid chain; its full sequence is Small ribosomal subunit protein uS11 (134 aa).

It belongs to the universal ribosomal protein uS11 family. Part of the 30S ribosomal subunit. Interacts with proteins S7 and S18. Binds to IF-3.

Functionally, located on the platform of the 30S subunit, it bridges several disparate RNA helices of the 16S rRNA. Forms part of the Shine-Dalgarno cleft in the 70S ribosome. In Micrococcus luteus (strain ATCC 4698 / DSM 20030 / JCM 1464 / CCM 169 / CCUG 5858 / IAM 1056 / NBRC 3333 / NCIMB 9278 / NCTC 2665 / VKM Ac-2230) (Micrococcus lysodeikticus), this protein is Small ribosomal subunit protein uS11.